Reading from the N-terminus, the 518-residue chain is T-box transcription factor TBX5 (518 aa).

The segment at 1-46 (MADTDEGFGLARTPLEPDSKDRSCDSKPESALGAPSKSPSSPQAAF) is disordered. Residues 15-28 (LEPDSKDRSCDSKP) are compositionally biased toward basic and acidic residues. A compositionally biased stretch (low complexity) spans 34–45 (APSKSPSSPQAA). Residues 58–238 (LHERELWLKF…NNPFAKGFRG (181 aa)) constitute a DNA-binding region (T-box). Disordered stretches follow at residues 254–307 (EYPV…LLPP) and 330–352 (ECSS…EEDT). Positions 269 to 301 (SNHSPFSSETRALSTSSNLGSQYQCENGVSGPS) are enriched in polar residues. Position 339 is an N6-acetyllysine (K339).

In terms of assembly, monomer. Homodimer (via the T-box); binds DNA as homodimer. Interacts (via the T-box) with NKX2-5 (via the homeobox); this complex binds DNA. Interacts with GATA4. Interacts with KAT2A and KAT2B. Post-translationally, acetylation at Lys-339 by KAT2A and KAT2B promotes nuclear retention.

It localises to the nucleus. Its subcellular location is the cytoplasm. In terms of biological role, DNA-binding protein that regulates the transcription of several genes and is involved in heart development and limb pattern formation. Binds to the core DNA motif of NPPA promoter. The protein is T-box transcription factor TBX5 (Tbx5) of Mus musculus (Mouse).